Here is a 610-residue protein sequence, read N- to C-terminus: UvrABC system protein C (610 aa).

One can recognise a GIY-YIG domain in the interval 16–94 (SQPGVYRMYD…IKLYQPRYNV (79 aa)). Residues 204–239 (DQVLTQLIARMEKASQDLAFEEAARIRDQIQAVRRV) form the UVR domain.

Belongs to the UvrC family. In terms of assembly, interacts with UvrB in an incision complex.

It is found in the cytoplasm. Its function is as follows. The UvrABC repair system catalyzes the recognition and processing of DNA lesions. UvrC both incises the 5' and 3' sides of the lesion. The N-terminal half is responsible for the 3' incision and the C-terminal half is responsible for the 5' incision. The protein is UvrABC system protein C of Salmonella paratyphi A (strain ATCC 9150 / SARB42).